The chain runs to 88 residues: Small ribosomal subunit protein uS19 (88 aa).

The protein belongs to the universal ribosomal protein uS19 family.

Functionally, protein S19 forms a complex with S13 that binds strongly to the 16S ribosomal RNA. This chain is Small ribosomal subunit protein uS19, found in Chlamydia caviae (strain ATCC VR-813 / DSM 19441 / 03DC25 / GPIC) (Chlamydophila caviae).